The primary structure comprises 593 residues: Proline dehydrogenase 1, mitochondrial (593 aa).

Residues 24-44 (PAAREQPAAGPGAEPVCGPAE) are disordered. K368 and K479 each carry N6-acetyllysine.

Belongs to the proline oxidase family. FAD serves as cofactor.

It is found in the mitochondrion matrix. The enzyme catalyses L-proline + a quinone = (S)-1-pyrroline-5-carboxylate + a quinol + H(+). It functions in the pathway amino-acid degradation; L-proline degradation into L-glutamate; L-glutamate from L-proline: step 1/2. Its function is as follows. Converts proline to delta-1-pyrroline-5-carboxylate. The polypeptide is Proline dehydrogenase 1, mitochondrial (Bos taurus (Bovine)).